A 140-amino-acid chain; its full sequence is ATP synthase epsilon chain (140 aa).

This sequence belongs to the ATPase epsilon chain family. F-type ATPases have 2 components, CF(1) - the catalytic core - and CF(0) - the membrane proton channel. CF(1) has five subunits: alpha(3), beta(3), gamma(1), delta(1), epsilon(1). CF(0) has three main subunits: a, b and c.

The protein resides in the cell inner membrane. Produces ATP from ADP in the presence of a proton gradient across the membrane. The sequence is that of ATP synthase epsilon chain from Yersinia pseudotuberculosis serotype O:1b (strain IP 31758).